A 107-amino-acid chain; its full sequence is MSITLSDSAAARVNAFLANRGKGFGLRLGVRTSGCSGMAYVLEFVDEPAAEDTVFEDKGVKVVIDGKSLQFLDGTQLDFVKEGLNEGFKFTNPNVKDECGCGESFNV.

Cysteine 35, cysteine 99, and cysteine 101 together coordinate Fe cation.

It belongs to the HesB/IscA family. In terms of assembly, homodimer; may form tetramers and higher multimers. It depends on Fe cation as a cofactor.

Its function is as follows. Is able to transfer iron-sulfur clusters to apo-ferredoxin. Multiple cycles of [2Fe2S] cluster formation and transfer are observed, suggesting that IscA acts catalytically. Recruits intracellular free iron so as to provide iron for the assembly of transient iron-sulfur cluster in IscU in the presence of IscS, L-cysteine and the thioredoxin reductase system TrxA/TrxB. The chain is Iron-binding protein IscA from Klebsiella pneumoniae subsp. pneumoniae (strain ATCC 700721 / MGH 78578).